Here is a 287-residue protein sequence, read N- to C-terminus: Polyamine aminopropyltransferase (287 aa).

Residues 5–238 (EIWYETLHAN…GIMTFAWASQ (234 aa)) form the PABS domain. S-methyl-5'-thioadenosine is bound at residue glutamine 33. Positions 64 and 88 each coordinate spermidine. S-methyl-5'-thioadenosine contacts are provided by residues glutamate 108 and 140-141 (DG). Residue aspartate 158 is the Proton acceptor of the active site. 158–161 (DCTD) provides a ligand contact to spermidine. Residue proline 165 coordinates S-methyl-5'-thioadenosine.

Belongs to the spermidine/spermine synthase family. In terms of assembly, homodimer or homotetramer.

The protein localises to the cytoplasm. The enzyme catalyses S-adenosyl 3-(methylsulfanyl)propylamine + putrescine = S-methyl-5'-thioadenosine + spermidine + H(+). It participates in amine and polyamine biosynthesis; spermidine biosynthesis; spermidine from putrescine: step 1/1. Catalyzes the irreversible transfer of a propylamine group from the amino donor S-adenosylmethioninamine (decarboxy-AdoMet) to putrescine (1,4-diaminobutane) to yield spermidine. This chain is Polyamine aminopropyltransferase, found in Serratia proteamaculans (strain 568).